Consider the following 323-residue polypeptide: CYFIP-related Rac1 interactor A (323 aa).

This sequence belongs to the CYRI family.

It localises to the membrane. Functionally, may negatively regulate RAC1 signaling and RAC1-driven cytoskeletal remodeling. May regulate chemotaxis, cell migration and epithelial polarization by controlling the polarity, plasticity, duration and extent of protrusions. The chain is CYFIP-related Rac1 interactor A (CYRIA) from Gallus gallus (Chicken).